Here is a 207-residue protein sequence, read N- to C-terminus: Ribosomal RNA small subunit methyltransferase G (207 aa).

S-adenosyl-L-methionine contacts are provided by residues glycine 73, leucine 78, 124–125, and arginine 139; that span reads VE.

This sequence belongs to the methyltransferase superfamily. RNA methyltransferase RsmG family.

It is found in the cytoplasm. The catalysed reaction is guanosine(527) in 16S rRNA + S-adenosyl-L-methionine = N(7)-methylguanosine(527) in 16S rRNA + S-adenosyl-L-homocysteine. In terms of biological role, specifically methylates the N7 position of guanine in position 527 of 16S rRNA. The protein is Ribosomal RNA small subunit methyltransferase G of Salmonella choleraesuis (strain SC-B67).